The chain runs to 1383 residues: Putative autophagy-related protein 11 (1383 aa).

Coiled-coil stretches lie at residues 16 to 49 (DKNN…YELN) and 117 to 324 (NLFL…QNKE). Composition is skewed to basic and acidic residues over residues 1151–1224 (EEEK…EDRK) and 1233–1249 (HSSD…KTKE). The segment at 1151–1249 (EEEKKKNEEE…KYNKKEKTKE (99 aa)) is disordered.

It belongs to the ATG11 family.

Its function is as follows. Involved in cytoplasm to vacuole transport (Cvt), pexophagy, mitophagy and nucleophagy. Works as scaffold proteins that recruit ATG proteins to the pre-autophagosome (PAS), the site of vesicle/autophagosome formation. The chain is Putative autophagy-related protein 11 from Plasmodium falciparum (isolate 3D7).